A 154-amino-acid polypeptide reads, in one-letter code: 17 kDa surface antigen (154 aa).

The first 19 residues, 1-19, serve as a signal peptide directing secretion; sequence MKLLSKIMIIALAASTLQA. C20 is lipidated: N-palmitoyl cysteine. The S-diacylglycerol cysteine moiety is linked to residue C20.

It belongs to the rickettsiale 17 kDa surface antigen family.

It is found in the cell outer membrane. The polypeptide is 17 kDa surface antigen (omp) (Rickettsia amblyommatis (Rickettsia amblyommii)).